We begin with the raw amino-acid sequence, 191 residues long: Signal peptidase IB (191 aa).

The Cytoplasmic portion of the chain corresponds to 1–7 (MKKEILE). The chain crosses the membrane as a helical span at residues 8–28 (WIISIAVAFVILFIVGKFIVT). The Extracellular portion of the chain corresponds to 29–191 (PYTIKGESMD…HNFNPENTKN (163 aa)). Residues serine 36 and lysine 77 contribute to the active site.

This sequence belongs to the peptidase S26 family.

It is found in the cell membrane. It catalyses the reaction Cleavage of hydrophobic, N-terminal signal or leader sequences from secreted and periplasmic proteins.. Functionally, essential for cell viability. This Staphylococcus aureus (strain COL) protein is Signal peptidase IB (spsB).